Here is a 593-residue protein sequence, read N- to C-terminus: Probable metalloendopeptidase G1-type (593 aa).

H41 is a binding site for Zn(2+). Residue E44 is part of the active site. H45 is a Zn(2+) binding site.

Belongs to the peptidase M44 family. The cofactor is Zn(2+).

Its function is as follows. Seems to be involved in viral proteins maturation by cleavage at Ala-Gly-|-Xaa motifs. This chain is Probable metalloendopeptidase G1-type, found in Homo sapiens (Human).